We begin with the raw amino-acid sequence, 296 residues long: Aquaporin NIP1-1 (296 aa).

Methionine 1 carries the N-acetylmethionine modification. Helical transmembrane passes span 57–77 and 84–104; these read LIAEFLGTYFLVFTGCASVVV and VVTLPGIAIVWGLTIMVLIYS. The NPA 1 motif lies at 114–116; sequence NPA. 3 helical membrane passes run 136–156, 180–200, and 205–225; these read VISQVIGSTLAAATLRLLFGL, AFTMEFIVTFYLMFIISGVAT, and IGELAGLAIGSTVLLNVLIAA. Positions 233-235 match the NPA 2 motif; it reads NPG. The chain crosses the membrane as a helical span at residues 249–269; the sequence is GIWIYLVAPTLGAIAGAWVYN. The residue at position 286 (serine 286) is a Phosphoserine.

The protein belongs to the MIP/aquaporin (TC 1.A.8) family. NIP (TC 1.A.8.12) subfamily. As to expression, expressed in roots.

It is found in the membrane. Its function is as follows. Water channel probably required to promote glycerol permeability and water transport across cell membranes. In Arabidopsis thaliana (Mouse-ear cress), this protein is Aquaporin NIP1-1 (NIP1-1).